The primary structure comprises 452 residues: UDP-N-acetylmuramoylalanine--D-glutamate ligase (452 aa).

119–125 (GSNGKTT) is an ATP binding site.

This sequence belongs to the MurCDEF family.

It is found in the cytoplasm. The catalysed reaction is UDP-N-acetyl-alpha-D-muramoyl-L-alanine + D-glutamate + ATP = UDP-N-acetyl-alpha-D-muramoyl-L-alanyl-D-glutamate + ADP + phosphate + H(+). It participates in cell wall biogenesis; peptidoglycan biosynthesis. Its function is as follows. Cell wall formation. Catalyzes the addition of glutamate to the nucleotide precursor UDP-N-acetylmuramoyl-L-alanine (UMA). The protein is UDP-N-acetylmuramoylalanine--D-glutamate ligase of Streptococcus pyogenes serotype M28 (strain MGAS6180).